The following is a 207-amino-acid chain: MKPLTPRQAEVLELIKVNMSETGMPPTRAEIAQKLGFKSANAAEEHLKALAKKGVIEIMPGTSRGIRLLIEEEAVLEETGLPLIGKVAAGEPILAQEHIESHYQVDPALFHPRADFLLRVQGMSMKNIGILDGDLLAVHKTQEVRNGQVVVARLDEDVTVKRFQRKGSQVWLLPENEELEPIAVDLSCQQLTIEGLAVGVIRNADWM.

The segment at residues 28–48 is a DNA-binding region (H-T-H motif); the sequence is RAEIAQKLGFKSANAAEEHLK. Catalysis depends on for autocatalytic cleavage activity residues serine 124 and lysine 161.

Belongs to the peptidase S24 family. Homodimer.

It carries out the reaction Hydrolysis of Ala-|-Gly bond in repressor LexA.. Its function is as follows. Represses a number of genes involved in the response to DNA damage (SOS response), including recA and lexA. In the presence of single-stranded DNA, RecA interacts with LexA causing an autocatalytic cleavage which disrupts the DNA-binding part of LexA, leading to derepression of the SOS regulon and eventually DNA repair. This chain is LexA repressor, found in Aeromonas salmonicida (strain A449).